The sequence spans 586 residues: Lipoprotein LpqB (586 aa).

Residues 1 to 17 form the signal peptide; that stretch reads MVRSVFALVFAAVLLGG. Residue Cys-18 is the site of N-palmitoyl cysteine attachment. Cys-18 carries S-diacylglycerol cysteine lipidation. Positions 26 to 45 are disordered; the sequence is APQAIGTVERPAPSNLPKPI.

The protein belongs to the LpqB lipoprotein family.

The protein resides in the cell membrane. The chain is Lipoprotein LpqB from Mycobacterium ulcerans (strain Agy99).